The following is a 643-amino-acid chain: Uromodulin (643 aa).

Positions 1–26 are cleaved as a signal peptide; that stretch reads MKCLFSPNFMWMAAVVTSWVIIPAAT. Residues 32–66 form the EGF-like 1 domain; sequence KSCSECHSNATCTVDGAATTCACQEGFTGDGLECV. Disulfide bonds link cysteine 34-cysteine 43, cysteine 37-cysteine 52, cysteine 54-cysteine 65, cysteine 71-cysteine 85, cysteine 79-cysteine 94, cysteine 96-cysteine 108, cysteine 114-cysteine 128, cysteine 122-cysteine 137, cysteine 139-cysteine 150, cysteine 152-cysteine 163, cysteine 157-cysteine 172, cysteine 176-cysteine 269, cysteine 197-cysteine 284, cysteine 219-cysteine 257, cysteine 225-cysteine 289, cysteine 250-cysteine 258, cysteine 299-cysteine 308, cysteine 302-cysteine 317, cysteine 319-cysteine 349, cysteine 337-cysteine 427, and cysteine 368-cysteine 391. Asparagine 40 is a glycosylation site (N-linked (GlcNAc...) asparagine). Residues 67–109 enclose the EGF-like 2; calcium-binding domain; sequence DLDECAVLGAHNCSATKSCVNTLGSYTCVCPEGFLLSSELGCE. A glycan (N-linked (GlcNAc...) asparagine) is linked at asparagine 78. The EGF-like 3; calcium-binding domain maps to 110–151; the sequence is DVDECAEPGLSRCHALATCINGEGNYSCVCPAGYLGDGRHCE. An N-linked (GlcNAc...) asparagine glycan is attached at asparagine 134. A beta hairpin region spans residues 152–173; the sequence is CSPGSCGPGLDCVREGDALVCV. The segment at 174 to 293 is D10C; the sequence is DPCQVHRILD…CHLAYCTDPS (120 aa). An N-linked (GlcNAc...) asparagine glycan is attached at asparagine 234. A glycan (N-linked (GlcNAc...) asparagine) is linked at asparagine 277. The EGF-like 4 domain occupies 294-325; sequence SVEGTCEECRVDEDCKSDNGEWHCQCKQDFNV. Asparagine 324 carries an N-linked (GlcNAc...) asparagine glycan. The interval 336–431 is ZP-N; that stretch reads ECGVDDIKLS…RINFACSYPL (96 aa). The ZP domain maps to 336-587; it reads ECGVDDIKLS…EKCRPTCPET (252 aa). 2 N-linked (GlcNAc...) asparagine glycosylation sites follow: asparagine 398 and asparagine 449. The flexible ZP-N/ZP-C linker; important for secretion and polymerization into filaments stretch occupies residues 432-455; it reads DMKVSLKTSLQPMVSALNISMGGT. The tract at residues 456–466 is internal hydrophobic patch (IHP); it reads GTFTVRMALFQ. The tract at residues 456 to 587 is ZP-C; it reads GTFTVRMALF…EKCRPTCPET (132 aa). Cystine bridges form between cysteine 508–cysteine 568, cysteine 529–cysteine 584, and cysteine 573–cysteine 580. N-linked (GlcNAc...) asparagine glycosylation is present at asparagine 515. The essential for cleavage by HPN stretch occupies residues 588 to 591; the sequence is RFRS. Residues 600 to 608 form an external hydrophobic patch (EHP); regulates polymerization into filaments region; the sequence is VLNLGPITR. Serine 621 is lipidated: GPI-anchor amidated serine. A propeptide spans 622–643 (removed in mature form); it reads SLGLLQVWLPLLLSATLTLMSP.

Homodimer that then polymerizes into long filaments. The filaments can additionally assemble laterally to form a sheet. The filaments consist of a zigzag-shaped backbone with laterally protruding arms which interact with bacterial adhesin fimH. Two fimH molecules can bind to a single UMOD monomer. In terms of processing, N-glycosylated. Post-translationally, proteolytically cleaved at a conserved C-terminal proteolytic cleavage site to generate the secreted form found in urine. This cleavage is catalyzed by HPN.

The protein localises to the apical cell membrane. Its subcellular location is the basolateral cell membrane. The protein resides in the cell projection. It is found in the cilium membrane. It localises to the secreted. Its function is as follows. Functions in biogenesis and organization of the apical membrane of epithelial cells of the thick ascending limb of Henle's loop (TALH), where it promotes formation of complex filamentous gel-like structure that may play a role in the water barrier permeability. May serve as a receptor for binding and endocytosis of cytokines (IL-1, IL-2) and TNF. Facilitates neutrophil migration across renal epithelia. Functionally, in the urine, may contribute to colloid osmotic pressure, retards passage of positively charged electrolytes, and inhibits formation of liquid containing supersaturated salts and subsequent formation of salt crystals. Protects against urinary tract infections by binding to type 1 fimbriated E.coli. Binds to bacterial adhesin fimH which mediates the stable formation of bacterial aggregates, prevents the binding of E.coli to uroplakins UPK1A and UPK1B which act as urothelial receptors for type I fimbriae, and allows for pathogen clearance through micturation. Also promotes aggregation of other bacteria including K.pneumoniae, P.aeruginosa and S.mitis and so may also protect against other uropathogens. The polypeptide is Uromodulin (UMOD) (Bos taurus (Bovine)).